A 494-amino-acid polypeptide reads, in one-letter code: MAGHVHTGSAAVLLVGLSFRSAPVSLLEQVSTVDTDLPKLENALLDHDSLSEALVLSTCNRMEFYTVANAFHPGLDHIVDTIATYSGLDDSELEPHLYVHYSDAAVEHMLNVASGLDSMVLGEQQIIGQLRGAYEESKGAGTVGRTLHDLTQRALRTGKRVHSETEIDSAGSSMVSFALDRALTVLGIPEASSDALSGRRAVVIGAGAMASLASTHLGRLGIEHVTVANRTVDRAEQLASHAVEAGVPARGIGLDELPAALTGADIVVSATGAVGTVVSAADIKAAQQVRDGRQQVLIDLSMPRDIEQATADVPGVALLNIEELTGMTEDTIEDEDAARGIVAEELESFLEQQRAQAVVPTVKALRQQAMDALSNEMLALQRQTPGMSDEDREAVNRSMRRLVEKLLHTPTVQAKKLSAAGQSVSYPDALAALFNLPTGMTQQVSAVKGANAGSGQRKKQKPQENRVSTARAVYRSTYQDLTQASTPGGKDDDQ.

Substrate is bound by residues 58–61 (TCNR), Ser-118, 123–125 (EQQ), and Gln-129. The active-site Nucleophile is Cys-59. Position 205-210 (205-210 (GAGAMA)) interacts with NADP(+). The segment at 448–494 (KGANAGSGQRKKQKPQENRVSTARAVYRSTYQDLTQASTPGGKDDDQ) is disordered. The segment covering 476–486 (STYQDLTQAST) has biased composition (polar residues).

The protein belongs to the glutamyl-tRNA reductase family. As to quaternary structure, homodimer.

It catalyses the reaction (S)-4-amino-5-oxopentanoate + tRNA(Glu) + NADP(+) = L-glutamyl-tRNA(Glu) + NADPH + H(+). Its pathway is porphyrin-containing compound metabolism; protoporphyrin-IX biosynthesis; 5-aminolevulinate from L-glutamyl-tRNA(Glu): step 1/2. Its function is as follows. Catalyzes the NADPH-dependent reduction of glutamyl-tRNA(Glu) to glutamate 1-semialdehyde (GSA). The protein is Glutamyl-tRNA reductase of Corynebacterium urealyticum (strain ATCC 43042 / DSM 7109).